The chain runs to 453 residues: Aldehyde dehydrogenase, dimeric NADP-preferring (453 aa).

Ser2 bears the N-acetylserine mark. N6-acetyllysine is present on Lys178. Residue Gly188–Gly193 coordinates NAD(+). Residue Lys194 is modified to N6-acetyllysine. Active-site residues include Glu210 and Cys244.

The protein belongs to the aldehyde dehydrogenase family. In terms of assembly, homodimer. In terms of tissue distribution, constitutively expressed in cornea, stomach, skin, bladder and lungs. Lowest expression levels in lungs and bladder.

It localises to the cytoplasm. The enzyme catalyses an aldehyde + NAD(+) + H2O = a carboxylate + NADH + 2 H(+). It catalyses the reaction octanal + NAD(+) + H2O = octanoate + NADH + 2 H(+). ALDHs play a major role in the detoxification of alcohol-derived acetaldehyde. They are involved in the metabolism of corticosteroids, biogenic amines, neurotransmitters, and lipid peroxidation. Oxidizes medium and long chain aldehydes into non-toxic fatty acids. Preferentially oxidizes aromatic aldehyde substrates. Comprises about 50 percent of corneal epithelial soluble proteins. May play a role in preventing corneal damage caused by ultraviolet light. The sequence is that of Aldehyde dehydrogenase, dimeric NADP-preferring (Aldh3a1) from Mus musculus (Mouse).